Reading from the N-terminus, the 305-residue chain is Nucleotide-binding protein Mpe_A3336 (305 aa).

22 to 29 contacts ATP; the sequence is GISGSGKS. 74-77 contributes to the GTP binding site; it reads DVRS.

Belongs to the RapZ-like family.

Functionally, displays ATPase and GTPase activities. The protein is Nucleotide-binding protein Mpe_A3336 of Methylibium petroleiphilum (strain ATCC BAA-1232 / LMG 22953 / PM1).